The following is a 312-amino-acid chain: MSTGHTVLGCQTTDKTVVTLFIILVLLCLVAVVGNGFIIIALGMKWLLRRTLSAHNKLLISLAASRFCLQCVVIGKNIYVFLNPTSFPYNPVIQLLNLMWDFLTAATIWLCSLLGFFYCVKIATLTHPVFVWLKYRLPGWVPWMLLSAVGMSSLTSILCFIGNYMIYQNHAKSGHQPWNVTGNSLRHSLEKFYFFSIKIIMWTIPTVVFSIFMSLLLVSLVRHMKKTFLALSELRDVWAQAHFKALLPLLSFIVLFISCFLTLVLSSASNTPYQEFRYWMWQVVIHLCTVIHPIVILFSNPVLRVVIKRGCC.

The Extracellular portion of the chain corresponds to 1-19 (MSTGHTVLGCQTTDKTVVT). Residues 20–40 (LFIILVLLCLVAVVGNGFIII) form a helical membrane-spanning segment. Residues 41–66 (ALGMKWLLRRTLSAHNKLLISLAASR) are Cytoplasmic-facing. A helical membrane pass occupies residues 67–87 (FCLQCVVIGKNIYVFLNPTSF). Residues 88–97 (PYNPVIQLLN) lie on the Extracellular side of the membrane. A helical transmembrane segment spans residues 98–118 (LMWDFLTAATIWLCSLLGFFY). The Cytoplasmic portion of the chain corresponds to 119–140 (CVKIATLTHPVFVWLKYRLPGW). The chain crosses the membrane as a helical span at residues 141–161 (VPWMLLSAVGMSSLTSILCFI). The Extracellular portion of the chain corresponds to 162–198 (GNYMIYQNHAKSGHQPWNVTGNSLRHSLEKFYFFSIK). Residue asparagine 179 is glycosylated (N-linked (GlcNAc...) asparagine). A helical membrane pass occupies residues 199–219 (IIMWTIPTVVFSIFMSLLLVS). At 220–244 (LVRHMKKTFLALSELRDVWAQAHFK) the chain is on the cytoplasmic side. Residues 245-265 (ALLPLLSFIVLFISCFLTLVL) traverse the membrane as a helical segment. Over 266 to 277 (SSASNTPYQEFR) the chain is Extracellular. The helical transmembrane segment at 278 to 298 (YWMWQVVIHLCTVIHPIVILF) threads the bilayer. The Cytoplasmic portion of the chain corresponds to 299–312 (SNPVLRVVIKRGCC).

Belongs to the G-protein coupled receptor T2R family.

Its subcellular location is the membrane. Its function is as follows. Putative taste receptor which may play a role in the perception of bitterness. This is Taste receptor type 2 member 135 (Tas2r135) from Mus musculus (Mouse).